Reading from the N-terminus, the 377-residue chain is Erythronate-4-phosphate dehydrogenase (377 aa).

Ser45 and Thr66 together coordinate substrate. Asp146 and Thr175 together coordinate NAD(+). Arg208 is a catalytic residue. Asp232 contributes to the NAD(+) binding site. The active site involves Glu237. His254 serves as the catalytic Proton donor. Gly257 is an NAD(+) binding site. Tyr258 contacts substrate.

Belongs to the D-isomer specific 2-hydroxyacid dehydrogenase family. PdxB subfamily. Homodimer.

It is found in the cytoplasm. It carries out the reaction 4-phospho-D-erythronate + NAD(+) = (R)-3-hydroxy-2-oxo-4-phosphooxybutanoate + NADH + H(+). Its pathway is cofactor biosynthesis; pyridoxine 5'-phosphate biosynthesis; pyridoxine 5'-phosphate from D-erythrose 4-phosphate: step 2/5. Catalyzes the oxidation of erythronate-4-phosphate to 3-hydroxy-2-oxo-4-phosphonooxybutanoate. The polypeptide is Erythronate-4-phosphate dehydrogenase (Sodalis glossinidius (strain morsitans)).